The following is a 464-amino-acid chain: MAASCLVLLALCLLLPLLLLGGWKRWRRGRTARHVVAVVLGDVGRSPRMQYHALSLAMHGFSVTLLGFCNSKPHDELLQNNRIQIVGLTELQSLAVGPRVFQYGVKVVFQAMYLLWKLMWREPGAYIFLQNPPGLPSIAVCWFVGCLCGSKLVIDWHNYGYSIMGLVHGPNHPLVLLAKWYERFFGRLSHLNLCVTNAMREDLAENWHIRAVTVYDKPASFFKETPLDLQHRLFMKLGGTHSPFRARSEPEDPATERSAFTERDAGSGLVTRLHERPALLVSSTSWTEDEDFSILLAALEKFEQLTLDGHSLPSLVCVITGKGPLREYYSHLIHQKHFQHIQVCTPWLEAEDYPLLLGSADLGVCLHTSSSGLDLPMKVVDMFGCHLPVCAVNFKCLHELVKHEENGLVFEDSEELAAQLQMLFSNFPDPAGKLNQFRKNLRESQQLRWDESWVQTVLPLVMDT.

Over 1–2 the chain is Lumenal; sequence MA. The chain crosses the membrane as a helical span at residues 3–23; that stretch reads ASCLVLLALCLLLPLLLLGGW. Residues 24 to 99 are Cytoplasmic-facing; sequence KRWRRGRTAR…ELQSLAVGPR (76 aa). An intramembrane region (helical) is located at residues 100–120; the sequence is VFQYGVKVVFQAMYLLWKLMW. The Cytoplasmic segment spans residues 121–464; that stretch reads REPGAYIFLQ…QTVLPLVMDT (344 aa). Phosphoserine is present on Ser242. The disordered stretch occupies residues 242–261; sequence SPFRARSEPEDPATERSAFT.

Belongs to the glycosyltransferase group 1 family. Glycosyltransferase 33 subfamily.

The protein localises to the endoplasmic reticulum membrane. The enzyme catalyses an N,N'-diacetylchitobiosyl-diphospho-di-trans,poly-cis-dolichol + GDP-alpha-D-mannose = a beta-D-Man-(1-&gt;4)-beta-D-GlcNAc-(1-&gt;4)-alpha-D-GlcNAc-diphospho-di-trans,poly-cis-dolichol + GDP + H(+). The protein operates within protein modification; protein glycosylation. Mannosyltransferase that operates in the biosynthetic pathway of dolichol-linked oligosaccharides, the glycan precursors employed in protein asparagine (N)-glycosylation. The assembly of dolichol-linked oligosaccharides begins on the cytosolic side of the endoplasmic reticulum membrane and finishes in its lumen. The sequential addition of sugars to dolichol pyrophosphate produces dolichol-linked oligosaccharides containing fourteen sugars, including two GlcNAcs, nine mannoses and three glucoses. Once assembled, the oligosaccharide is transferred from the lipid to nascent proteins by oligosaccharyltransferases. Catalyzes, on the cytoplasmic face of the endoplasmic reticulum, the addition of the first mannose residues to the dolichol-linked oligosaccharide chain, to produce Man1GlcNAc(2)-PP-dolichol core oligosaccharide. Man1GlcNAc(2)-PP-dolichol is a substrate for ALG2, the following enzyme in the biosynthetic pathway. This chain is Chitobiosyldiphosphodolichol beta-mannosyltransferase, found in Pongo abelii (Sumatran orangutan).